The chain runs to 387 residues: ATP phosphoribosyltransferase regulatory subunit (387 aa).

Belongs to the class-II aminoacyl-tRNA synthetase family. HisZ subfamily. In terms of assembly, heteromultimer composed of HisG and HisZ subunits.

The protein resides in the cytoplasm. Its pathway is amino-acid biosynthesis; L-histidine biosynthesis; L-histidine from 5-phospho-alpha-D-ribose 1-diphosphate: step 1/9. Its function is as follows. Required for the first step of histidine biosynthesis. May allow the feedback regulation of ATP phosphoribosyltransferase activity by histidine. This is ATP phosphoribosyltransferase regulatory subunit from Psychrobacter arcticus (strain DSM 17307 / VKM B-2377 / 273-4).